Consider the following 251-residue polypeptide: CDP-diacylglycerol pyrophosphatase (251 aa).

Residues 4 to 24 (AGLLFLVMIVIAVVATGIGYW) traverse the membrane as a helical segment.

It belongs to the Cdh family.

It localises to the cell inner membrane. It catalyses the reaction a CDP-1,2-diacyl-sn-glycerol + H2O = a 1,2-diacyl-sn-glycero-3-phosphate + CMP + 2 H(+). The protein operates within phospholipid metabolism; CDP-diacylglycerol degradation; phosphatidate from CDP-diacylglycerol: step 1/1. This Escherichia coli O45:K1 (strain S88 / ExPEC) protein is CDP-diacylglycerol pyrophosphatase.